The primary structure comprises 599 residues: Serine/threonine-protein kinase Nek1 (599 aa).

Residues Y4–L258 enclose the Protein kinase domain. Residues I10–A18 and K33 each bind ATP. The Proton acceptor role is filled by D129. Disordered stretches follow at residues S364–K386, S461–C482, and D504–S542. Residues D511–S530 are compositionally biased toward low complexity.

The protein belongs to the protein kinase superfamily. NEK Ser/Thr protein kinase family. NIMA subfamily. Expressed in anthers, pistils and leaves.

It catalyses the reaction L-seryl-[protein] + ATP = O-phospho-L-seryl-[protein] + ADP + H(+). The catalysed reaction is L-threonyl-[protein] + ATP = O-phospho-L-threonyl-[protein] + ADP + H(+). Its function is as follows. May be involved in plant development processes. The protein is Serine/threonine-protein kinase Nek1 of Oryza sativa subsp. japonica (Rice).